A 529-amino-acid polypeptide reads, in one-letter code: Protein PAT1 homolog 2 (529 aa).

The disordered stretch occupies residues 153-183 (QILQQQQRWRRRRSPTARSVPAQKPWSREPA).

It belongs to the PAT1 family. As to quaternary structure, interacts with LSM1.

It is found in the cytoplasm. Its subcellular location is the nucleus. In terms of biological role, RNA-binding protein that acts as a translational repressor. The chain is Protein PAT1 homolog 2 (Patl2) from Mus musculus (Mouse).